Reading from the N-terminus, the 451-residue chain is Phosphoglucosamine mutase (451 aa).

The active-site Phosphoserine intermediate is the Ser102. 4 residues coordinate Mg(2+): Ser102, Asp242, Asp244, and Asp246. Ser102 bears the Phosphoserine mark.

It belongs to the phosphohexose mutase family. Mg(2+) is required as a cofactor. In terms of processing, activated by phosphorylation.

The enzyme catalyses alpha-D-glucosamine 1-phosphate = D-glucosamine 6-phosphate. In terms of biological role, catalyzes the conversion of glucosamine-6-phosphate to glucosamine-1-phosphate. In Staphylococcus saprophyticus subsp. saprophyticus (strain ATCC 15305 / DSM 20229 / NCIMB 8711 / NCTC 7292 / S-41), this protein is Phosphoglucosamine mutase.